The following is a 288-amino-acid chain: 4-diphosphocytidyl-2-C-methyl-D-erythritol kinase (288 aa).

Lysine 10 is an active-site residue. 94-104 lines the ATP pocket; sequence PVAAGLGGGSS. Aspartate 136 is a catalytic residue.

It belongs to the GHMP kinase family. IspE subfamily.

The catalysed reaction is 4-CDP-2-C-methyl-D-erythritol + ATP = 4-CDP-2-C-methyl-D-erythritol 2-phosphate + ADP + H(+). The protein operates within isoprenoid biosynthesis; isopentenyl diphosphate biosynthesis via DXP pathway; isopentenyl diphosphate from 1-deoxy-D-xylulose 5-phosphate: step 3/6. Its function is as follows. Catalyzes the phosphorylation of the position 2 hydroxy group of 4-diphosphocytidyl-2C-methyl-D-erythritol. This chain is 4-diphosphocytidyl-2-C-methyl-D-erythritol kinase, found in Lactiplantibacillus plantarum (strain ATCC BAA-793 / NCIMB 8826 / WCFS1) (Lactobacillus plantarum).